The chain runs to 334 residues: Zinc-finger homeodomain protein 10 (334 aa).

A compositionally biased stretch (low complexity) spans 1-15 (MMDMTPTITTTTTPT). 2 disordered regions span residues 1–33 (MMDM…QPAK) and 103–164 (FHRR…LLSL). The segment at 56–107 (YKECLKNHAAALGGHALDGCGEFMPSPSSISSDPTSLKCAACGCHRNFHRRD) adopts a ZF-HD dimerization-type; degenerate zinc-finger fold. A compositionally biased stretch (pro residues) spans 136 to 155 (PPPPPPPPPRSPNSASPPPI). The homeobox DNA-binding region spans 200–263 (RKRFRTKFSQ…NNKNTFNRRD (64 aa)). Residues 292-334 (NGHHGVGGGGELHQSVSSGGGGGGFDSDSGGANGGNVNGSSSS) are disordered. Over residues 309 to 328 (SGGGGGGFDSDSGGANGGNV) the composition is skewed to gly residues.

In terms of assembly, homo- and heterodimer with other ZFHD proteins. Interacts with MIF1, MIF2 and MIF3; these interactions prevent nuclear localization and DNA-binding to inhibit transcription regulation activity. Binds to ZHD1, ZHD2, ZHD4, ZHD5, ZHD6, ZHD7 and ZHD8. Interacts with KIN10 and KIN11. As to expression, mostly expressed in rosettes (e.g. young leaves), flowers (e.g. styles), siliques and inflorescence.

It localises to the nucleus. Its function is as follows. Putative transcription factor. Probably involved in establishing polarity during leaf development through the gibberellic acid (GA) signaling pathway. The sequence is that of Zinc-finger homeodomain protein 10 (ZHD10) from Arabidopsis thaliana (Mouse-ear cress).